We begin with the raw amino-acid sequence, 1639 residues long: RIMS-binding protein 3A (1639 aa).

Disordered stretches follow at residues 1 to 22, 215 to 240, and 295 to 364; these read MAKD…SSPA, GSPD…CHAP, and SLDS…LTPS. Residues 21-143 adopt a coiled-coil conformation; that stretch reads PAAAVLENQR…ELQRQLAEEL (123 aa). Positions 326–339 are enriched in pro residues; it reads SPPPSPLPPPPPPS. Coiled coils occupy residues 409-442 and 480-619; these read QADE…QETN and LAKD…AEEN. The interval 697-811 is disordered; sequence CRPGHPPEQP…DRDTASEVDD (115 aa). Polar residues-rich tracts occupy residues 707–718 and 761–775; these read WETSQMPESQVK and SVPQ…SQPL. A compositionally biased stretch (low complexity) spans 776 to 790; the sequence is SKKTSSQSNSSSEGS. The SH3 1 domain occupies 832–899; sequence PKLKIFMAQY…PSNFVEQIPD (68 aa). 2 consecutive Fibronectin type-III domains span residues 995–1083 and 1088–1184; these read APMQ…TLLA and PPLD…IPED. 2 disordered regions span residues 1251–1273 and 1292–1330; these read PRRQ…GAGS and QKSP…FIHL. The span at 1293-1305 shows a compositional bias: polar residues; it reads KSPQNHRPPSVSD. 2 SH3 domains span residues 1452–1520 and 1569–1636; these read TPAR…EMEV and WTPK…HMSL.

This sequence belongs to the RIMBP family. As to quaternary structure, interacts with LRGUK (via guanylate kinase-like domain). Interacts (via C-terminus) with HOOK1 (via coiled-coil region).

The protein resides in the cytoplasm. It is found in the cytoskeleton. Functionally, probable component of the manchette, a microtubule-based structure which plays a key role in sperm head morphogenesis during late stages of sperm development. In Homo sapiens (Human), this protein is RIMS-binding protein 3A (RIMBP3).